Here is a 433-residue protein sequence, read N- to C-terminus: Cyclin-dependent kinase F-3 (433 aa).

Residues 4–283 enclose the Protein kinase domain; sequence YKVIREIGDG…AEQSLQHPFF (280 aa). Residues 10-18 and Lys33 contribute to the ATP site; that span reads IGDGTCGNV. Asp125 acts as the Proton acceptor in catalysis. Residue Ser151 is modified to Phosphoserine. Thr156 is modified (phosphothreonine).

Belongs to the protein kinase superfamily. CMGC Ser/Thr protein kinase family. CDC2/CDKX subfamily.

The enzyme catalyses L-seryl-[protein] + ATP = O-phospho-L-seryl-[protein] + ADP + H(+). The catalysed reaction is L-threonyl-[protein] + ATP = O-phospho-L-threonyl-[protein] + ADP + H(+). It catalyses the reaction [DNA-directed RNA polymerase] + ATP = phospho-[DNA-directed RNA polymerase] + ADP + H(+). The sequence is that of Cyclin-dependent kinase F-3 (CDKF-3) from Oryza sativa subsp. japonica (Rice).